A 427-amino-acid polypeptide reads, in one-letter code: Enolase (427 aa).

(2R)-2-phosphoglycerate is bound at residue Gln-163. The active-site Proton donor is the Glu-205. Asp-242, Glu-285, and Asp-312 together coordinate Mg(2+). (2R)-2-phosphoglycerate-binding residues include Lys-337, Arg-366, Ser-367, and Lys-388. The active-site Proton acceptor is the Lys-337.

Belongs to the enolase family. The cofactor is Mg(2+).

It localises to the cytoplasm. Its subcellular location is the secreted. The protein localises to the cell surface. The catalysed reaction is (2R)-2-phosphoglycerate = phosphoenolpyruvate + H2O. It functions in the pathway carbohydrate degradation; glycolysis; pyruvate from D-glyceraldehyde 3-phosphate: step 4/5. Functionally, catalyzes the reversible conversion of 2-phosphoglycerate (2-PG) into phosphoenolpyruvate (PEP). It is essential for the degradation of carbohydrates via glycolysis. The protein is Enolase of Paraburkholderia phymatum (strain DSM 17167 / CIP 108236 / LMG 21445 / STM815) (Burkholderia phymatum).